The chain runs to 265 residues: Glutamate racemase (265 aa).

Substrate is bound by residues aspartate 12–serine 13 and tyrosine 44–glycine 45. Cysteine 75 functions as the Proton donor/acceptor in the catalytic mechanism. Residue asparagine 76–threonine 77 coordinates substrate. Residue cysteine 186 is the Proton donor/acceptor of the active site. Threonine 187–histidine 188 lines the substrate pocket.

This sequence belongs to the aspartate/glutamate racemases family.

The catalysed reaction is L-glutamate = D-glutamate. The protein operates within cell wall biogenesis; peptidoglycan biosynthesis. Its function is as follows. Provides the (R)-glutamate required for cell wall biosynthesis. This chain is Glutamate racemase, found in Pseudomonas aeruginosa (strain UCBPP-PA14).